We begin with the raw amino-acid sequence, 273 residues long: 4-hydroxy-tetrahydrodipicolinate reductase (273 aa).

NAD(+) is bound by residues G8–M13, E34, G102–T104, and S128–M131. H160 acts as the Proton donor/acceptor in catalysis. H161 lines the (S)-2,3,4,5-tetrahydrodipicolinate pocket. The active-site Proton donor is K164. A (S)-2,3,4,5-tetrahydrodipicolinate-binding site is contributed by G170–T171.

The protein belongs to the DapB family.

The protein localises to the cytoplasm. The enzyme catalyses (S)-2,3,4,5-tetrahydrodipicolinate + NAD(+) + H2O = (2S,4S)-4-hydroxy-2,3,4,5-tetrahydrodipicolinate + NADH + H(+). It carries out the reaction (S)-2,3,4,5-tetrahydrodipicolinate + NADP(+) + H2O = (2S,4S)-4-hydroxy-2,3,4,5-tetrahydrodipicolinate + NADPH + H(+). Its pathway is amino-acid biosynthesis; L-lysine biosynthesis via DAP pathway; (S)-tetrahydrodipicolinate from L-aspartate: step 4/4. In terms of biological role, catalyzes the conversion of 4-hydroxy-tetrahydrodipicolinate (HTPA) to tetrahydrodipicolinate. The sequence is that of 4-hydroxy-tetrahydrodipicolinate reductase from Methanobrevibacter smithii (strain ATCC 35061 / DSM 861 / OCM 144 / PS).